A 217-amino-acid polypeptide reads, in one-letter code: Monomethylamine corrinoid protein 2 (217 aa).

The B12-binding N-terminal domain occupies 1 to 91 (MTNTEIFDKL…ELEKNKKEGD (91 aa)). Positions 93–217 (AGLAITFVAE…AAKVALEVMK (125 aa)) constitute a B12-binding domain. His106 lines the methylcob(III)alamin pocket.

It belongs to the methylamine corrinoid protein family. Can form a complex with MtmB.

It participates in one-carbon metabolism; methanogenesis from methylamine. In terms of biological role, acts as a methyl group carrier between MtmB and MtbA. This chain is Monomethylamine corrinoid protein 2 (mtmC2), found in Methanosarcina barkeri.